Reading from the N-terminus, the 325-residue chain is Putative ankyrin repeat protein RF_0011 (325 aa).

ANK repeat units lie at residues Asn-63 to Met-94, Arg-99 to Ala-130, and Cys-134 to Ile-164.

The chain is Putative ankyrin repeat protein RF_0011 from Rickettsia felis (strain ATCC VR-1525 / URRWXCal2) (Rickettsia azadi).